A 782-amino-acid polypeptide reads, in one-letter code: DnaJ homolog subfamily C member 16 (782 aa).

A signal peptide spans 1–25 (MEVRKLSISWQFLIVLVLILQILSA). At 26–535 (LDFDPYKVLG…DSIFHNNWRE (510 aa)) the chain is on the cytoplasmic side. Residues 29 to 93 (DPYKVLGVSR…EKRSNYDQYG (65 aa)) form the J domain. The Thioredoxin domain maps to 119 to 247 (FYFDESFFHF…LRQFVESLLP (129 aa)). A helical; Anchor for type IV membrane protein membrane pass occupies residues 536-556 (MMPLLSLIFSALFILFGTVIV). The Extracellular portion of the chain corresponds to 557–782 (QAFSDSSDER…FYIPSWPELD (226 aa)). Residues 562–593 (SSDERESSPPDKEEAQEKTGKTEPSFTKENSS) form a disordered region. The segment covering 563 to 582 (SDERESSPPDKEEAQEKTGK) has biased composition (basic and acidic residues). Positions 583–593 (TEPSFTKENSS) are enriched in polar residues. N631 is a glycosylation site (N-linked (GlcNAc...) asparagine).

It localises to the endoplasmic reticulum membrane. In terms of biological role, plays an important role in regulating the size of autophagosomes during the formation process. In Pongo abelii (Sumatran orangutan), this protein is DnaJ homolog subfamily C member 16 (DNAJC16).